A 97-amino-acid chain; its full sequence is Kunitz-type trypsin inhibitor 1 (97 aa).

Belongs to the protease inhibitor I3 (leguminous Kunitz-type inhibitor) family.

Exhibits Kunitz trypsin protease inhibitor activity. The chain is Kunitz-type trypsin inhibitor 1 from Selenicereus costaricensis (Red-fleshed dragon fruit).